Consider the following 3289-residue polypeptide: tRNA nuclease CdiA (3289 aa).

The signal sequence occupies residues 1-32 (MHQPPVRFTYRLLSYLISTIIAGQPLLPAVGA). Residues 36 to 322 (PQNGAGMDKA…AGGNLSVSSR (287 aa)) are two-partner system transport domain (TPS). The interval 351–1398 (EKLTAGRDVT…IVVRTGHLLN (1048 aa)) is FHA-1. The disordered stretch occupies residues 595 to 615 (AVNASEKLTHSGKSSAPSLSL). The tract at residues 1399–1689 (QREGFSATTT…LTGQTGISDD (291 aa)) is receptor binding domain (RBD). A YP domain region spans residues 1690 to 1874 (WPLPSGNNGY…LSPEDITLHN (185 aa)). The interval 1875–1935 (GSVISGNNVQ…DLSAIGDISN (61 aa)) is periplasmic FHA-1 repeat (pFR). The FHA-2 stretch occupies residues 1979–2653 (TDTGPVATIK…TSKYDSKQTS (675 aa)). Positions 2097 to 2113 (RESKNSRNGRSESHESH) are enriched in basic and acidic residues. 3 disordered regions span residues 2097 to 2116 (RESK…HAAV), 2332 to 2356 (GSSK…TIGS), and 2466 to 2513 (TGDP…TGKN). Polar residues-rich tracts occupy residues 2344-2356 (GTTQ…TIGS) and 2472-2507 (TGVS…NLSV). The pretoxin (PT) domain stretch occupies residues 2992–3034 (SDLSEEQKQTISTLATVSAGLAGGLTGNSTASAAVGAQSGKNA). The VENN CT cleavage motif signature appears at 3035 to 3038 (VENN). A C-terminal effector domain (CT); has tRNase activity region spans residues 3035 to 3289 (VENNYLSVSE…VGHIQPVKVK (255 aa)). The segment at 3039 to 3197 (YLSVSEKTEL…PLIGQAASNK (159 aa)) is inner membrane translocation domain (IMTD), targets protein to PtsG.

It in the N-terminal section; belongs to the CdiA toxin family. In terms of assembly, forms a contact-dependent growth inhibition complex of CdiA-CT-NC101, CdiI-NC101 and EF-Tu; the complex is a dimer of heterotrimers. Stable CdiA-CT-NC101, EF-Tu complexes are not detected, nor are complexes with EF-Ts.

Its subcellular location is the secreted. The protein localises to the target cell. The protein resides in the target cell cytoplasm. Toxic component of a toxin-immunity protein module, which functions as a cellular contact-dependent growth inhibition (CDI) system. CDI modules allow bacteria to communicate with and inhibit the growth of closely related neighboring bacteria in a contact-dependent fashion (target cell counts decrease about 10,0000-fold for this system). CdiA toxicity is neutralized by its cognate immunity protein CdiI-NC101, but not by CdiI from other bacteria. The C-terminal domain (CT) cleaves tRNA endonucleolytically at the 5' side of guanine discriminator nucleotide sites (removes the last 4 nucleotides of the tRNA acceptor arm when the first nucleotide to be removed is G). Requires EF-Ts (tsf) for toxic function of the CT domain in vivo. In vitro the CT tRNase activity requires both EF-Tu (tufA) and EF-Ts. EF-Ts probably increases steady-state GTP-EF-Tu-aa-tRNA substrate levels. The CT domain is thought to remodel this same complex to displace the 3'-end of the aa-tRNA and allow it to enter into the toxin active site. The CT domain gains access to the cytoplasm of target cells by using integral inner membrane protein PTS system glucose-specific EIICB component (ptsG). In terms of biological role, the CdiA protein is thought to be exported from the cell through the central lumen of CdiB, the other half of its two-partner system (TPS). The TPS domain probably remains associated with CdiB while the FHA-1 domain forms an extended filament with the receptor-binding domain (RBD) at its extremity; in the secretion arrested state the C-terminus of the RBD and YP domains form a hairpin-like structure as the FHA-2, PT and CT domains are periplasmic. The YP domain is probably responsible for this arrest at the point where it re-enters the host cell periplasm. Upon binding to a target cell outer membrane receptor a signal is transmitted to activate secretion. The filament elongates slightly, the rest of CdiA is secreted and the FHA-2 domain becomes stably associated with the target cell's outer membrane where it facilitates entry of the toxic CT domain into the target cell periplasm. From there the toxic CT domain is cleaved and gains access to the target cell cytoplasm via an inner membrane protein (PtsG for this CDI). The polypeptide is tRNA nuclease CdiA (Escherichia coli (strain NC101)).